The primary structure comprises 116 residues: MNEIIRAIEAEQLRTDLPDFKIGDNVKVYVKVTEGTRERVQMFEGTVIKKQNGGLRETFTVRRVAYGCGVERTFPMHAPIIEKIEISRRGKVRRAKLYYLRDRVGKAAKVKELLTR.

It belongs to the bacterial ribosomal protein bL19 family.

Its function is as follows. This protein is located at the 30S-50S ribosomal subunit interface and may play a role in the structure and function of the aminoacyl-tRNA binding site. This is Large ribosomal subunit protein bL19 from Clostridium botulinum (strain Eklund 17B / Type B).